The sequence spans 67 residues: MMSKLGVVLTICLLPFPLTALPMDGDQPADLPALRTQDFEPERSPWFDPVKRCCSQDCRVCIPCCPY.

The N-terminal stretch at 1 to 20 (MMSKLGVVLTICLLPFPLTA) is a signal peptide. Positions 21-50 (LPMDGDQPADLPALRTQDFEPERSPWFDPV) are excised as a propeptide. 3 cysteine pairs are disulfide-bonded: C53–C65, C54–C61, and C58–C64. P63 is modified (4-hydroxyproline).

This sequence belongs to the conotoxin M superfamily. As to expression, expressed by the venom duct.

It is found in the secreted. The sequence is that of Conotoxin VnMMSK-03 from Conus ventricosus (Mediterranean cone).